Consider the following 543-residue polypeptide: Transmembrane protease serine 13 (543 aa).

Disordered regions lie at residues 1-96 (MDRG…TRVY) and 109-129 (RASPARSAPATRATRESPGLS). At 1-143 (MDRGSHRNSS…SWQETQRQLP (143 aa)) the chain is on the cytoplasmic side. Tandem repeats lie at residues 14–17 (TPPQ) and 18–22 (ASPAR). Positions 14-49 (TPPQASPARTSPARAPPQASPARTPPQASPARTPPQ) are 4 X 4 AA repeats of T-P-P-Q. The interval 18 to 69 (ASPARTSPARAPPQASPARTPPQASPARTPPQASPARAPPPQASPARASPAR) is 8 X 5 AA repeats of A-S-P-A-R. The stretch at 23-27 (TSPAR) is one 2-2; approximate repeat. A compositionally biased stretch (pro residues) spans 27-60 (RAPPQASPARTPPQASPARTPPQASPARAPPPQA). A 1-2; approximate repeat occupies 28-31 (APPQ). 5 repeat units span residues 32–36 (ASPAR), 37–40 (TPPQ), 41–45 (ASPAR), 46–49 (TPPQ), and 50–54 (ASPAR). Residues 55–59 (APPPQ) form a 2-6; approximate repeat. 2 repeat units span residues 60 to 64 (ASPAR) and 65 to 69 (ASPAR). Composition is skewed to low complexity over residues 61 to 94 (SPARASPARAPPSRSSSGRSSSARSASTTSSPTR) and 109 to 120 (RASPARSAPATR). The chain crosses the membrane as a helical; Signal-anchor for type II membrane protein span at residues 144–164 (LIGCVILLISLVISLILLFYF). At 165–543 (WRGHTGIKYK…MESEVRFRKS (379 aa)) the chain is on the extracellular side. Residues 180 to 202 (CPIHAVRCDGVVDCKMKSDELGC) enclose the LDL-receptor class A domain. Positions 199-301 (ELGCVRFDWD…HCGLRAMTGR (103 aa)) constitute an SRCR domain. 3 disulfide bridges follow: Cys-226–Cys-290, Cys-239–Cys-293, and Cys-327–Cys-343. N-linked (GlcNAc...) asparagine glycosylation is found at Asn-231 and Asn-268. In terms of domain architecture, Peptidase S1 spans 302-535 (IVGGALTSES…VLPWIYRKME (234 aa)). The Charge relay system role is filled by His-342. N-linked (GlcNAc...) asparagine glycosylation occurs at Asn-381. Asp-390 acts as the Charge relay system in catalysis. Asn-421 carries an N-linked (GlcNAc...) asparagine glycan. 3 disulfide bridges follow: Cys-424/Cys-493, Cys-456/Cys-472, and Cys-483/Cys-511. The active-site Charge relay system is Ser-487.

It belongs to the peptidase S1 family. As to quaternary structure, interacts with SPINT1/HAI-1; the interaction promotes the phosphorylation and cell membrane localization of TMPRSS13. Interacts with SPINT2/HAI-2; the interaction promotes the phosphorylation and cell membrane localization of TMPRSS13. Post-translationally, the inactive zymogen is post-translationally modified and then trafficked to the cell surface, whereby it undergoes autocatalytic cleavage resulting in an activated form that is released extracellularly. Phosphorylation is required for localization at the cell surface. Phosphorylation increases following inhibition of protease activity by SPINT2/HAI-2. Expressed in the suprabasal squamous epithelium of the epidermis, hair follicles, oral epithelium, cornea, upper digestive tract, transitional epithelium of the bladder, prostate, heart, intestine, kidney and thymus.

It is found in the cell membrane. Its subcellular location is the secreted. The protein resides in the cytoplasm. Cleavage of HGF is inhibited by SPINT1/HAI-1 via the BPTI/Kunitz inhibitor 1 domain. Functionally, serine protease. Cleaves the proform of PRSS8/prostasin to form the active protein. Cleaves the proform of HGF to form the active protein which promotes MAPK signaling. Promotes the formation of the stratum corneum and subsequently the epidermal barrier in embryos. The sequence is that of Transmembrane protease serine 13 (Tmprss13) from Mus musculus (Mouse).